Consider the following 236-residue polypeptide: Ribonuclease P protein component 3 (236 aa).

This sequence belongs to the eukaryotic/archaeal RNase P protein component 3 family. In terms of assembly, consists of a catalytic RNA component and at least 4-5 protein subunits.

It localises to the cytoplasm. It catalyses the reaction Endonucleolytic cleavage of RNA, removing 5'-extranucleotides from tRNA precursor.. Its function is as follows. Part of ribonuclease P, a protein complex that generates mature tRNA molecules by cleaving their 5'-ends. The polypeptide is Ribonuclease P protein component 3 (Natronomonas pharaonis (strain ATCC 35678 / DSM 2160 / CIP 103997 / JCM 8858 / NBRC 14720 / NCIMB 2260 / Gabara) (Halobacterium pharaonis)).